The sequence spans 322 residues: 26S proteasome non-ATPase regulatory subunit 7 (322 aa).

Residues 9–144 (VVVHPLVLLS…TEAYISVEEV (136 aa)) form the MPN domain. K180 is covalently cross-linked (Glycyl lysine isopeptide (Lys-Gly) (interchain with G-Cter in ubiquitin)). N6-acetyllysine is present on residues K204, K214, K314, and K315. The disordered stretch occupies residues 281–322 (ANRDAEKKEGQEKEDSKKDRKDDKEKEKEKSDVKKEEKKEKK).

The protein belongs to the peptidase M67A family. Component of the 19S proteasome regulatory particle complex. The 26S proteasome consists of a 20S core particle (CP) and two 19S regulatory subunits (RP). The regulatory particle is made of a lid composed of 9 subunits including PSMD7, a base containing 6 ATPases and few additional components. Within the complex, PSMD7 interacts with subunit PSMD4 through their respective MPN domain. Interacts with TRIM5.

Component of the 26S proteasome, a multiprotein complex involved in the ATP-dependent degradation of ubiquitinated proteins. This complex plays a key role in the maintenance of protein homeostasis by removing misfolded or damaged proteins, which could impair cellular functions, and by removing proteins whose functions are no longer required. Therefore, the proteasome participates in numerous cellular processes, including cell cycle progression, apoptosis, or DNA damage repair. The chain is 26S proteasome non-ATPase regulatory subunit 7 (PSMD7) from Bos taurus (Bovine).